Here is a 370-residue protein sequence, read N- to C-terminus: MDGVKANQRQQLQLLLVAARHQLSRSDLRSMIQFLENEDCGFNVTLQMADPSEQPELLELHRLVATPALIKLSPTPKQVFAGSSIFQQLQNWITRWQQDIVVTGLGLSLRPTELDGSRTQRELQLEDQLLVLRQENETLIDRLNAQERTLRMVAHELRTPLTAAVLALQSQQLGQINIEHFQDVVKRRLDEIELLSKDLLEVKSTKWEDLFNPQNLDLGNIAAEAILELEKLWLDRNIEIRTDIPSDLPKVFADQRRMRQVLLNLLENALKFTEDGGEVSLTMLHRTSHWVQVSICDNGPGIPEDEQERIFLDRVRLPQTSVSTSGFGVGLSVCRRIVEVHGGKIWVVSEPDKGACFYLTVPVWQRNGQE.

In terms of domain architecture, Histidine kinase spans M152–Q365. At H155 the chain carries Phosphohistidine; by autocatalysis.

In terms of assembly, homooligomerizes. Interacts with KaiC. Participates in the KaiBC complex, whose core is composed of a KaiC homohexamer and 6 KaiB.

It carries out the reaction ATP + protein L-histidine = ADP + protein N-phospho-L-histidine.. Its function is as follows. Member of the two-component regulatory system SasA/RpaA involved in genome-wide circadian gene expression. One of several clock output pathways. Participates in the Kai clock protein complex, the main circadian regulator in cyanobacteria, via its interaction with KaiC. KaiC enhances the autophosphorylation activity of SasA, which then transfers its phosphate group to RpaA to activate it. In addition to its output function, recruits fold-shifted KaiB (KaiB(fs)) to KaiC to cooperatively form the KaiB(6):KaiC(6) complex (independent of SasA kinase activity). Required for robustness of the circadian rhythm of gene expression and is involved in clock output, also required for adaptation to light/dark cycles. This Prochlorococcus marinus (strain MIT 9313) protein is Adaptive-response sensory kinase SasA.